Consider the following 286-residue polypeptide: Pantothenate synthetase (286 aa).

30 to 37 lines the ATP pocket; sequence MGNLHSGH. His-37 functions as the Proton donor in the catalytic mechanism. Gln-61 provides a ligand contact to (R)-pantoate. Gln-61 serves as a coordination point for beta-alanine. Residue 149-152 participates in ATP binding; that stretch reads GQKD. Gln-155 contacts (R)-pantoate. Residues Val-178 and 186–189 each bind ATP; that span reads LSSR.

This sequence belongs to the pantothenate synthetase family. In terms of assembly, homodimer.

It is found in the cytoplasm. It catalyses the reaction (R)-pantoate + beta-alanine + ATP = (R)-pantothenate + AMP + diphosphate + H(+). It functions in the pathway cofactor biosynthesis; (R)-pantothenate biosynthesis; (R)-pantothenate from (R)-pantoate and beta-alanine: step 1/1. Functionally, catalyzes the condensation of pantoate with beta-alanine in an ATP-dependent reaction via a pantoyl-adenylate intermediate. This chain is Pantothenate synthetase, found in Pseudomonas fluorescens (strain Pf0-1).